The sequence spans 204 residues: Protein OPG030 (204 aa).

The BACK domain occupies 95-177 (FLRQYINNNI…ITYSELTNAI (83 aa)).

This sequence belongs to the orthopoxvirus OPG030 family.

The protein is Protein OPG030 (OPG30) of Homo sapiens (Human).